Here is a 219-residue protein sequence, read N- to C-terminus: Small ribosomal subunit protein uS3 (219 aa).

Positions 41-110 (IRKIINTEYS…DVSINICEVK (70 aa)) constitute a KH type-2 domain.

This sequence belongs to the universal ribosomal protein uS3 family. As to quaternary structure, part of the 30S ribosomal subunit. Forms a tight complex with proteins S10 and S14.

Functionally, binds the lower part of the 30S subunit head. Binds mRNA in the 70S ribosome, positioning it for translation. This Orientia tsutsugamushi (strain Ikeda) (Rickettsia tsutsugamushi) protein is Small ribosomal subunit protein uS3.